A 475-amino-acid chain; its full sequence is Aspartyl/glutamyl-tRNA(Asn/Gln) amidotransferase subunit B (475 aa).

Belongs to the GatB/GatE family. GatB subfamily. In terms of assembly, heterotrimer of A, B and C subunits.

The catalysed reaction is L-glutamyl-tRNA(Gln) + L-glutamine + ATP + H2O = L-glutaminyl-tRNA(Gln) + L-glutamate + ADP + phosphate + H(+). The enzyme catalyses L-aspartyl-tRNA(Asn) + L-glutamine + ATP + H2O = L-asparaginyl-tRNA(Asn) + L-glutamate + ADP + phosphate + 2 H(+). Functionally, allows the formation of correctly charged Asn-tRNA(Asn) or Gln-tRNA(Gln) through the transamidation of misacylated Asp-tRNA(Asn) or Glu-tRNA(Gln) in organisms which lack either or both of asparaginyl-tRNA or glutaminyl-tRNA synthetases. The reaction takes place in the presence of glutamine and ATP through an activated phospho-Asp-tRNA(Asn) or phospho-Glu-tRNA(Gln). The polypeptide is Aspartyl/glutamyl-tRNA(Asn/Gln) amidotransferase subunit B (Chlorobaculum tepidum (strain ATCC 49652 / DSM 12025 / NBRC 103806 / TLS) (Chlorobium tepidum)).